The following is a 128-amino-acid chain: Small ribosomal subunit protein eS8 (128 aa).

The tract at residues 1–31 is disordered; the sequence is MAWYQGNDLRKPTGGKKTRHRKKRKHELGRP. The span at 13–27 shows a compositional bias: basic residues; that stretch reads TGGKKTRHRKKRKHE.

It belongs to the eukaryotic ribosomal protein eS8 family. In terms of assembly, part of the 30S ribosomal subunit.

This Staphylothermus marinus (strain ATCC 43588 / DSM 3639 / JCM 9404 / F1) protein is Small ribosomal subunit protein eS8.